Reading from the N-terminus, the 137-residue chain is Methylglyoxal synthase (137 aa).

Residues 1-137 (MNIALVAHDQ…EVRKSKSQRI (137 aa)) enclose the MGS-like domain. Substrate contacts are provided by residues His8, Lys12, 34–37 (TGTT), and 54–55 (SG). The Proton donor/acceptor role is filled by Asp60. A substrate-binding site is contributed by His87.

This sequence belongs to the methylglyoxal synthase family.

It carries out the reaction dihydroxyacetone phosphate = methylglyoxal + phosphate. Functionally, catalyzes the formation of methylglyoxal from dihydroxyacetone phosphate. This is Methylglyoxal synthase from Clostridioides difficile (strain 630) (Peptoclostridium difficile).